The following is a 124-amino-acid chain: Small ribosomal subunit protein uS13 (124 aa).

A disordered region spans residues 94–124; sequence RGMPVRGQRTKTNARTRKGPKRTIAGKKKAR.

This sequence belongs to the universal ribosomal protein uS13 family. As to quaternary structure, part of the 30S ribosomal subunit. Forms a loose heterodimer with protein S19. Forms two bridges to the 50S subunit in the 70S ribosome.

Its function is as follows. Located at the top of the head of the 30S subunit, it contacts several helices of the 16S rRNA. In the 70S ribosome it contacts the 23S rRNA (bridge B1a) and protein L5 of the 50S subunit (bridge B1b), connecting the 2 subunits; these bridges are implicated in subunit movement. Contacts the tRNAs in the A and P-sites. This Mycobacterium tuberculosis (strain ATCC 25177 / H37Ra) protein is Small ribosomal subunit protein uS13.